The following is a 169-amino-acid chain: Gamma-crystallin 2 (169 aa).

Beta/gamma crystallin 'Greek key' domains are found at residues 1-34 (YEDR…KVDS) and 35-77 (GCWM…KVIP). Residues 78-82 (QQKGP) are connecting peptide. 2 Beta/gamma crystallin 'Greek key' domains span residues 83–123 (HKMK…NVLE) and 124–166 (GHWI…RRVL).

The protein belongs to the beta/gamma-crystallin family. In terms of assembly, monomer.

Its function is as follows. Crystallins are the dominant structural components of the vertebrate eye lens. In Rana temporaria (European common frog), this protein is Gamma-crystallin 2.